The sequence spans 105 residues: Urease subunit beta (105 aa).

This sequence belongs to the urease beta subunit family. Heterotrimer of UreA (gamma), UreB (beta) and UreC (alpha) subunits. Three heterotrimers associate to form the active enzyme.

It localises to the cytoplasm. It catalyses the reaction urea + 2 H2O + H(+) = hydrogencarbonate + 2 NH4(+). The protein operates within nitrogen metabolism; urea degradation; CO(2) and NH(3) from urea (urease route): step 1/1. The sequence is that of Urease subunit beta from Marinomonas sp. (strain MWYL1).